The chain runs to 568 residues: Potassium-transporting ATPase potassium-binding subunit (568 aa).

Transmembrane regions (helical) follow at residues 3-23 (TEIL…YPLG), 64-84 (FLKA…VLLV), 133-153 (FVIM…MAGV), 179-199 (ILLP…TPMG), 255-275 (MVEC…LGFY), 281-301 (LGYS…FINV), 375-395 (FGGV…AVFI), 418-438 (IATF…AISS), 497-517 (IVLI…AGLL), and 535-555 (VTFA…SFFP).

The protein belongs to the KdpA family. In terms of assembly, the system is composed of three essential subunits: KdpA, KdpB and KdpC.

The protein localises to the cell inner membrane. Part of the high-affinity ATP-driven potassium transport (or Kdp) system, which catalyzes the hydrolysis of ATP coupled with the electrogenic transport of potassium into the cytoplasm. This subunit binds the periplasmic potassium ions and delivers the ions to the membrane domain of KdpB through an intramembrane tunnel. This is Potassium-transporting ATPase potassium-binding subunit from Bacteroides fragilis (strain ATCC 25285 / DSM 2151 / CCUG 4856 / JCM 11019 / LMG 10263 / NCTC 9343 / Onslow / VPI 2553 / EN-2).